Consider the following 97-residue polypeptide: Aspartyl/glutamyl-tRNA(Asn/Gln) amidotransferase subunit C (97 aa).

It belongs to the GatC family. Heterotrimer of A, B and C subunits.

It carries out the reaction L-glutamyl-tRNA(Gln) + L-glutamine + ATP + H2O = L-glutaminyl-tRNA(Gln) + L-glutamate + ADP + phosphate + H(+). The enzyme catalyses L-aspartyl-tRNA(Asn) + L-glutamine + ATP + H2O = L-asparaginyl-tRNA(Asn) + L-glutamate + ADP + phosphate + 2 H(+). Allows the formation of correctly charged Asn-tRNA(Asn) or Gln-tRNA(Gln) through the transamidation of misacylated Asp-tRNA(Asn) or Glu-tRNA(Gln) in organisms which lack either or both of asparaginyl-tRNA or glutaminyl-tRNA synthetases. The reaction takes place in the presence of glutamine and ATP through an activated phospho-Asp-tRNA(Asn) or phospho-Glu-tRNA(Gln). The sequence is that of Aspartyl/glutamyl-tRNA(Asn/Gln) amidotransferase subunit C from Synechococcus sp. (strain JA-2-3B'a(2-13)) (Cyanobacteria bacterium Yellowstone B-Prime).